A 216-amino-acid chain; its full sequence is MARIIDLVPWDDGSTHVYASPAILLPMERQRNQLAGVKQQLYHPALPTLRHMDRDTVKACLPDEHCQSTTYCRKDEFDNAHFTLLGVPNKPLQCLDITATGQKLRNRYHEGKLAPIAPGINRVDWPCFTRAIEDWSHFVSSAGEFKLPCLRKRAEGLSGYAVRYLKPDVTQTWRYCLSQNPSLDRYGQKPLPFDSLNTFRSFGSSYSRVNYLTPWH.

As to quaternary structure, microtubule inner protein component of sperm flagellar doublet microtubules. In terms of tissue distribution, expressed in testis, prostate and placenta.

Its subcellular location is the cytoplasm. The protein resides in the cytoskeleton. The protein localises to the flagellum axoneme. In terms of biological role, microtubule inner protein (MIP) part of the dynein-decorated doublet microtubules (DMTs) in flagellum axoneme. May serve to reinforce and thus stabilize the microtubule structure in the sperm flagella. The chain is Sperm microtubule inner protein 8 from Homo sapiens (Human).